The primary structure comprises 542 residues: Cytochrome P450 monooxygenase 91 (542 aa).

The signal sequence occupies residues Met-1–Leu-22. 2 N-linked (GlcNAc...) asparagine glycosylation sites follow: Asn-299 and Asn-392. Position 482 (Cys-482) interacts with heme.

Belongs to the cytochrome P450 family. It depends on heme as a cofactor.

It participates in secondary metabolite biosynthesis. In terms of biological role, cytochrome P450 monooxygenase that is able to use dehydroabietic acid as a substrate for oxidation. The polypeptide is Cytochrome P450 monooxygenase 91 (Postia placenta (strain ATCC 44394 / Madison 698-R) (Brown rot fungus)).